The primary structure comprises 79 residues: Translational regulator CsrA (79 aa).

Belongs to the CsrA/RsmA family. Homodimer; the beta-strands of each monomer intercalate to form a hydrophobic core, while the alpha-helices form wings that extend away from the core.

The protein resides in the cytoplasm. In terms of biological role, a translational regulator that binds mRNA to regulate translation initiation and/or mRNA stability. Usually binds in the 5'-UTR at or near the Shine-Dalgarno sequence preventing ribosome-binding, thus repressing translation. Its main target seems to be the major flagellin gene, while its function is anatagonized by FliW. In Solidesulfovibrio magneticus (strain ATCC 700980 / DSM 13731 / RS-1) (Desulfovibrio magneticus), this protein is Translational regulator CsrA.